The sequence spans 520 residues: Probable helicase MJECL08 (520 aa).

ATP is bound by residues R162, 171-176 (GAGKSN), and 501-502 (KI).

This sequence belongs to the HerA family.

The catalysed reaction is Couples ATP hydrolysis with the unwinding of duplex DNA at the replication fork by translocating in the 5'-3' direction. This creates two antiparallel DNA single strands (ssDNA). The leading ssDNA polymer is the template for DNA polymerase III holoenzyme which synthesizes a continuous strand.. It catalyses the reaction ATP + H2O = ADP + phosphate + H(+). The enzyme catalyses Couples ATP hydrolysis with the unwinding of duplex DNA by translocating in the 3'-5' direction.. In terms of biological role, a probably bidirectional DNA helicase. This chain is Probable helicase MJECL08, found in Methanocaldococcus jannaschii (strain ATCC 43067 / DSM 2661 / JAL-1 / JCM 10045 / NBRC 100440) (Methanococcus jannaschii).